The chain runs to 271 residues: MRAEPALLELKLDYRFNDPELLRRALTHSSLANENRPGAGVGSPLNDNEQLEFLGDSVLGFLIAEALVRRFPEYHEGDLSRLKAHLVSAAHLHGVARRLDLGSYLELGRSEEMSGGRTKKTLLVDGLEAIMAAIYLDGGVDAARAFVATHVLDAPFFGDEEAGTDIQPAITNFKSALQELAQTRRLPQPRYSVVRERGPEHSKTFTVEVRVGKEWTAQAEGRTKKIAAQRAARGLYERLMGDPIVPLPDDSPGDSPDDSGDAAESGVISAT.

One can recognise an RNase III domain in the interval Pro-5–Gly-139. A Mg(2+)-binding site is contributed by Glu-52. Asp-56 is a catalytic residue. Mg(2+) is bound by residues Asp-125 and Glu-128. The active site involves Glu-128. Positions Asn-172–Gly-241 constitute a DRBM domain. Residues Gly-241 to Thr-271 are disordered. The segment covering Ser-251–Asp-261 has biased composition (acidic residues).

The protein belongs to the ribonuclease III family. Homodimer. Mg(2+) serves as cofactor.

The protein localises to the cytoplasm. The enzyme catalyses Endonucleolytic cleavage to 5'-phosphomonoester.. Digests double-stranded RNA. Involved in the processing of primary rRNA transcript to yield the immediate precursors to the large and small rRNAs (23S and 16S). Processes some mRNAs, and tRNAs when they are encoded in the rRNA operon. Processes pre-crRNA and tracrRNA of type II CRISPR loci if present in the organism. The chain is Ribonuclease 3 from Solibacter usitatus (strain Ellin6076).